Reading from the N-terminus, the 262-residue chain is Acyl-[acyl-carrier-protein]--UDP-N-acetylglucosamine O-acyltransferase (262 aa).

It belongs to the transferase hexapeptide repeat family. LpxA subfamily. As to quaternary structure, homotrimer.

Its subcellular location is the cytoplasm. It catalyses the reaction a (3R)-hydroxyacyl-[ACP] + UDP-N-acetyl-alpha-D-glucosamine = a UDP-3-O-[(3R)-3-hydroxyacyl]-N-acetyl-alpha-D-glucosamine + holo-[ACP]. The protein operates within glycolipid biosynthesis; lipid IV(A) biosynthesis; lipid IV(A) from (3R)-3-hydroxytetradecanoyl-[acyl-carrier-protein] and UDP-N-acetyl-alpha-D-glucosamine: step 1/6. Its function is as follows. Involved in the biosynthesis of lipid A, a phosphorylated glycolipid that anchors the lipopolysaccharide to the outer membrane of the cell. This is Acyl-[acyl-carrier-protein]--UDP-N-acetylglucosamine O-acyltransferase from Paraburkholderia phymatum (strain DSM 17167 / CIP 108236 / LMG 21445 / STM815) (Burkholderia phymatum).